A 227-amino-acid chain; its full sequence is UPF0173 metal-dependent hydrolase Tlet_1100 (227 aa).

The protein belongs to the UPF0173 family.

The protein is UPF0173 metal-dependent hydrolase Tlet_1100 of Pseudothermotoga lettingae (strain ATCC BAA-301 / DSM 14385 / NBRC 107922 / TMO) (Thermotoga lettingae).